The following is a 308-amino-acid chain: Aspartate carbamoyltransferase catalytic subunit (308 aa).

Carbamoyl phosphate-binding residues include R57 and T58. Residue K86 participates in L-aspartate binding. Residues R107, H135, and Q138 each coordinate carbamoyl phosphate. Positions 167 and 228 each coordinate L-aspartate. Positions 267 and 268 each coordinate carbamoyl phosphate.

The protein belongs to the aspartate/ornithine carbamoyltransferase superfamily. ATCase family. Heterooligomer of catalytic and regulatory chains.

It carries out the reaction carbamoyl phosphate + L-aspartate = N-carbamoyl-L-aspartate + phosphate + H(+). It functions in the pathway pyrimidine metabolism; UMP biosynthesis via de novo pathway; (S)-dihydroorotate from bicarbonate: step 2/3. In terms of biological role, catalyzes the condensation of carbamoyl phosphate and aspartate to form carbamoyl aspartate and inorganic phosphate, the committed step in the de novo pyrimidine nucleotide biosynthesis pathway. This is Aspartate carbamoyltransferase catalytic subunit from Methanosarcina barkeri (strain Fusaro / DSM 804).